The chain runs to 805 residues: Na(+)/H(+) antiporter subunit A (805 aa).

21 helical membrane-spanning segments follow: residues 4–22 (LHWA…PFLY), 29–51 (HTGW…YLSI), 80–102 (SLLF…IFYL), 109–128 (LNNF…GVVL), 132–154 (LIVL…SYWF), 167–189 (MLIT…VMTG), 209–231 (FLPA…PFHI), 244–266 (SAYL…LTPV), 271–293 (AEWF…TSAV), 300–322 (GILA…LGSA), 332–354 (PAFY…TFKG), 375–397 (LGGL…ASMA), 431–453 (IIIV…IMFF), 474–496 (IGML…FPNI), 529–551 (GFNA…FLMM), 597–614 (YFAY…YTMF), 629–651 (IAPY…PFIN), 656–674 (AVVV…FVVF), 679–701 (LALT…FYHL), 714–736 (NVLN…LSSL), and 778–795 (MLEV…IALI).

The protein belongs to the CPA3 antiporters (TC 2.A.63) subunit A family. Forms a heterooligomeric complex that consists of seven subunits: MrpA, MrpB, MrpC, MrpD, MrpE, MrpF and MrpG.

Its subcellular location is the cell membrane. In terms of biological role, mnh complex is a Na(+)Li(+)/H(+) antiporter involved in Na(+) and/or Li(+) excretion and Na(+) resistance. Na(+)/H(+) antiport consumes a transmembrane electrical potential, and is thus inferred to be electrogenic. Does not transport K(+), Ca(2+) or Mg(2+). The chain is Na(+)/H(+) antiporter subunit A (mrpA) from Alkalihalophilus pseudofirmus (strain ATCC BAA-2126 / JCM 17055 / OF4) (Bacillus pseudofirmus).